A 324-amino-acid chain; its full sequence is Holliday junction branch migration complex subunit RuvB (324 aa).

The tract at residues Met-1 to Tyr-168 is large ATPase domain (RuvB-L). Residues Tyr-14, Ile-15, Gly-48, Lys-51, Thr-52, Thr-53, Asp-97, Thr-146, Tyr-168, and Arg-205 each contribute to the ATP site. Position 52 (Thr-52) interacts with Mg(2+). Residues Thr-169 to Gly-239 are small ATPAse domain (RuvB-S). Residues Glu-242–Pro-324 are head domain (RuvB-H). Positions 297 and 302 each coordinate DNA.

It belongs to the RuvB family. Homohexamer. Forms a complex with RuvA. Electron microscopic images suggest 2 closely interacting RuvA tetramers sandwich the HJ DNA; each tetramer associates with an RuvB hexamer. Forms 2 complexes with Holliday junction (HJ) DNA which probably have 1 and 2 RuvA tetramers per complex (called complex I and complex II). Forms an RuvA(8)-RuvB(12)-Holliday junction (HJ) complex. HJ DNA is sandwiched between 2 RuvA tetramers; dsDNA enters through RuvA and exits via RuvB. An RuvB hexamer assembles on each DNA strand where it exits the tetramer. Each RuvB hexamer is contacted by two RuvA subunits (via domain III) on 2 adjacent RuvB subunits; this complex drives branch migration. In the full resolvosome a probable DNA-RuvA(4)-RuvB(12)-RuvC(2) complex forms which resolves the HJ. It depends on Mg(2+) as a cofactor.

Its subcellular location is the cytoplasm. It catalyses the reaction ATP + H2O = ADP + phosphate + H(+). Its activity is regulated as follows. The activity of RuvB is enhanced by E.coli RuvA. The RuvA-RuvB-RuvC complex processes Holliday junction (HJ) DNA during genetic recombination and DNA repair, while the RuvA-RuvB complex plays an important role in the rescue of blocked DNA replication forks via replication fork reversal (RFR). RuvA specifically binds to HJ cruciform DNA, conferring on it an open structure. The RuvB hexamer acts as an ATP-dependent pump, pulling dsDNA into and through the RuvAB complex. RuvB forms 2 homohexamers on either side of HJ DNA bound by 1 or 2 RuvA tetramers; 4 subunits per hexamer contact DNA at a time. Coordinated motions by a converter formed by DNA-disengaged RuvB subunits stimulates ATP hydrolysis and nucleotide exchange. Immobilization of the converter enables RuvB to convert the ATP-contained energy into a lever motion, pulling 2 nucleotides of DNA out of the RuvA tetramer per ATP hydrolyzed, thus driving DNA branch migration. The RuvB motors rotate together with the DNA substrate, which together with the progressing nucleotide cycle form the mechanistic basis for DNA recombination by continuous HJ branch migration. Branch migration allows RuvC to scan DNA until it finds its consensus sequence, where it cleaves and resolves cruciform DNA. Functionally, ruvB is a Mg(2+)-dependent, DNA-dependent ATPase with an equal preference for supercoiled and linear dsDNA; all (d)NTPs tested were efficiently hydrolyzed. Promotes Holliday junction (HJ) dissociation at 60 degrees Celsius in the presence of ATP but not ATP-gamma-S or ADP; (d)ATP, (d)CTP and dTTP also power dissociation in the absence of any RuvA. RuvA stimulates the ATPase of RuvB in the presence of dsDNA and HJ branch migration by RuvB. Excess RuvB stimulates some branch migration in vitro even in the presence of mutant RuvA. The protein is Holliday junction branch migration complex subunit RuvB of Thermus thermophilus (strain ATCC 27634 / DSM 579 / HB8).